Consider the following 181-residue polypeptide: Isopentenyl-diphosphate Delta-isomerase (181 aa).

Residues H24 and H30 each coordinate Mn(2+). In terms of domain architecture, Nudix hydrolase spans 28–168; that stretch reads LLHLAFSVLL…PDTFSVWFPT (141 aa). The active site involves C68. C68 contributes to the Mg(2+) binding site. Residue H70 coordinates Mn(2+). Mg(2+) is bound at residue E88. Positions 117 and 119 each coordinate Mn(2+). E119 is a catalytic residue.

Belongs to the IPP isomerase type 1 family. Mg(2+) serves as cofactor. Requires Mn(2+) as cofactor.

It localises to the cytoplasm. It carries out the reaction isopentenyl diphosphate = dimethylallyl diphosphate. It participates in isoprenoid biosynthesis; dimethylallyl diphosphate biosynthesis; dimethylallyl diphosphate from isopentenyl diphosphate: step 1/1. Functionally, catalyzes the 1,3-allylic rearrangement of the homoallylic substrate isopentenyl (IPP) to its highly electrophilic allylic isomer, dimethylallyl diphosphate (DMAPP). The sequence is that of Isopentenyl-diphosphate Delta-isomerase from Aliivibrio fischeri (strain ATCC 700601 / ES114) (Vibrio fischeri).